We begin with the raw amino-acid sequence, 938 residues long: Isoleucine--tRNA ligase (938 aa).

The 'HIGH' region signature appears at 58–68 (PYANGSIHIGH). Residue Lys183 is modified to N6-acetyllysine. Glu561 is an L-isoleucyl-5'-AMP binding site. Positions 602-606 (KMSKS) match the 'KMSKS' region motif. Residue Lys605 coordinates ATP. Zn(2+)-binding residues include Cys901, Cys904, Cys921, and Cys924.

The protein belongs to the class-I aminoacyl-tRNA synthetase family. IleS type 1 subfamily. In terms of assembly, monomer. The cofactor is Zn(2+).

The protein localises to the cytoplasm. It catalyses the reaction tRNA(Ile) + L-isoleucine + ATP = L-isoleucyl-tRNA(Ile) + AMP + diphosphate. Its function is as follows. Catalyzes the attachment of isoleucine to tRNA(Ile). As IleRS can inadvertently accommodate and process structurally similar amino acids such as valine, to avoid such errors it has two additional distinct tRNA(Ile)-dependent editing activities. One activity is designated as 'pretransfer' editing and involves the hydrolysis of activated Val-AMP. The other activity is designated 'posttransfer' editing and involves deacylation of mischarged Val-tRNA(Ile). In Escherichia coli O9:H4 (strain HS), this protein is Isoleucine--tRNA ligase.